The sequence spans 442 residues: D-aminoacyl-tRNA deacylase (442 aa).

Belongs to the DtdA deacylase family. In terms of assembly, monomer. Zn(2+) is required as a cofactor.

The catalysed reaction is a D-aminoacyl-tRNA + H2O = a tRNA + a D-alpha-amino acid + H(+). The enzyme catalyses glycyl-tRNA(Ala) + H2O = tRNA(Ala) + glycine + H(+). Functionally, D-aminoacyl-tRNA deacylase with broad substrate specificity. By recycling D-aminoacyl-tRNA to D-amino acids and free tRNA molecules, this enzyme counteracts the toxicity associated with the formation of D-aminoacyl-tRNA entities in vivo. The protein is D-aminoacyl-tRNA deacylase of Methanospirillum hungatei JF-1 (strain ATCC 27890 / DSM 864 / NBRC 100397 / JF-1).